A 137-amino-acid polypeptide reads, in one-letter code: Nucleoside diphosphate kinase (137 aa).

Lys9, Phe57, Arg85, Thr91, Arg102, and Asn112 together coordinate ATP. The Pros-phosphohistidine intermediate role is filled by His115.

The protein belongs to the NDK family. As to quaternary structure, homotetramer. Requires Mg(2+) as cofactor.

It localises to the cytoplasm. The catalysed reaction is a 2'-deoxyribonucleoside 5'-diphosphate + ATP = a 2'-deoxyribonucleoside 5'-triphosphate + ADP. It catalyses the reaction a ribonucleoside 5'-diphosphate + ATP = a ribonucleoside 5'-triphosphate + ADP. In terms of biological role, major role in the synthesis of nucleoside triphosphates other than ATP. The ATP gamma phosphate is transferred to the NDP beta phosphate via a ping-pong mechanism, using a phosphorylated active-site intermediate. The protein is Nucleoside diphosphate kinase of Pelobacter propionicus (strain DSM 2379 / NBRC 103807 / OttBd1).